Consider the following 149-residue polypeptide: Ribosome maturation factor RimP (149 aa).

Belongs to the RimP family.

The protein resides in the cytoplasm. Required for maturation of 30S ribosomal subunits. This is Ribosome maturation factor RimP from Clostridium acetobutylicum (strain ATCC 824 / DSM 792 / JCM 1419 / IAM 19013 / LMG 5710 / NBRC 13948 / NRRL B-527 / VKM B-1787 / 2291 / W).